The primary structure comprises 331 residues: 6-phosphogluconolactonase (331 aa).

Lysine 287 is modified (N6-acetyllysine).

The protein belongs to the cycloisomerase 2 family.

It carries out the reaction 6-phospho-D-glucono-1,5-lactone + H2O = 6-phospho-D-gluconate + H(+). It functions in the pathway carbohydrate degradation; pentose phosphate pathway; D-ribulose 5-phosphate from D-glucose 6-phosphate (oxidative stage): step 2/3. Catalyzes the hydrolysis of 6-phosphogluconolactone to 6-phosphogluconate. The protein is 6-phosphogluconolactonase of Shigella sonnei (strain Ss046).